The following is a 128-amino-acid chain: MIPVLLVTICLAVFPFQGSSIILESGNINDYEIVYPKKVNVLPTGAMNSAHPCCDPVTCQPKQGEHCISGPCCRNCKFLNSGTICKRARGDNLHDYCTGISSDCPRNPYKGKYDPMKWPAAAKGSVLM.

A signal peptide spans Met1 to Ser20. The propeptide occupies Ile21–Met47. In terms of domain architecture, Disintegrin spans Gly26–Lys112. 4 cysteine pairs are disulfide-bonded: Cys53/Cys76, Cys67/Cys73, Cys72/Cys97, and Cys85/Cys104. A Cell attachment site motif is present at residues Arg89–Asp91. Residues Pro115 to Met128 constitute a propeptide that is removed on maturation.

It belongs to the disintegrin family. Dimeric disintegrin subfamily. Heterodimer with EO5B; disulfide-linked. In terms of tissue distribution, expressed by the venom gland.

The protein localises to the secreted. Its function is as follows. Poor inhibitor of platelet aggregation. The disintegrin inhibits the adhesion of cells expressing the RGD-dependent integrin alpha-5/beta-1 (ITGA5/ITGB1) to immobilized fibronectin. Inhibition on alpha-2b/beta-3 (ITGA2B/ITGB3) is low. In Echis ocellatus (Ocellated saw-scaled viper), this protein is Disintegrin EO4A.